Here is a 152-residue protein sequence, read N- to C-terminus: Ubiquitin-conjugating enzyme E2 2 (152 aa).

Residues 4 to 150 form the UBC core domain; sequence PARKRLMRDF…VREVVEQSWT (147 aa). Cys88 acts as the Glycyl thioester intermediate in catalysis.

It belongs to the ubiquitin-conjugating enzyme family.

It carries out the reaction S-ubiquitinyl-[E1 ubiquitin-activating enzyme]-L-cysteine + [E2 ubiquitin-conjugating enzyme]-L-cysteine = [E1 ubiquitin-activating enzyme]-L-cysteine + S-ubiquitinyl-[E2 ubiquitin-conjugating enzyme]-L-cysteine.. Its pathway is protein modification; protein ubiquitination. In terms of biological role, catalyzes the covalent attachment of ubiquitin to other proteins. In Triticum aestivum (Wheat), this protein is Ubiquitin-conjugating enzyme E2 2 (UBC2).